The sequence spans 492 residues: 2-succinylbenzoate--CoA ligase (492 aa).

It belongs to the ATP-dependent AMP-binding enzyme family. MenE subfamily.

It carries out the reaction 2-succinylbenzoate + ATP + CoA = 2-succinylbenzoyl-CoA + AMP + diphosphate. The protein operates within quinol/quinone metabolism; 1,4-dihydroxy-2-naphthoate biosynthesis; 1,4-dihydroxy-2-naphthoate from chorismate: step 5/7. It participates in quinol/quinone metabolism; menaquinone biosynthesis. In terms of biological role, converts 2-succinylbenzoate (OSB) to 2-succinylbenzoyl-CoA (OSB-CoA). The sequence is that of 2-succinylbenzoate--CoA ligase from Staphylococcus aureus (strain USA300 / TCH1516).